The chain runs to 571 residues: Proline--tRNA ligase (571 aa).

Belongs to the class-II aminoacyl-tRNA synthetase family. ProS type 1 subfamily. As to quaternary structure, homodimer.

The protein localises to the cytoplasm. It catalyses the reaction tRNA(Pro) + L-proline + ATP = L-prolyl-tRNA(Pro) + AMP + diphosphate. In terms of biological role, catalyzes the attachment of proline to tRNA(Pro) in a two-step reaction: proline is first activated by ATP to form Pro-AMP and then transferred to the acceptor end of tRNA(Pro). As ProRS can inadvertently accommodate and process non-cognate amino acids such as alanine and cysteine, to avoid such errors it has two additional distinct editing activities against alanine. One activity is designated as 'pretransfer' editing and involves the tRNA(Pro)-independent hydrolysis of activated Ala-AMP. The other activity is designated 'posttransfer' editing and involves deacylation of mischarged Ala-tRNA(Pro). The misacylated Cys-tRNA(Pro) is not edited by ProRS. The chain is Proline--tRNA ligase from Pseudomonas putida (strain GB-1).